The following is a 645-amino-acid chain: Lipase 1 (645 aa).

The first 24 residues, 1 to 24, serve as a signal peptide directing secretion; sequence MKRSFIFAPGMLALSISAISNAHA. Catalysis depends on Ser34, which acts as the Nucleophile. Catalysis depends on residues Asp327 and His330. The Autotransporter domain occupies 383–645; it reads NEQGKLGVFG…SFSLGVNASF (263 aa).

Belongs to the 'GDSL' lipolytic enzyme family.

It is found in the secreted. The enzyme catalyses a triacylglycerol + H2O = a diacylglycerol + a fatty acid + H(+). In Photorhabdus luminescens (Xenorhabdus luminescens), this protein is Lipase 1 (lip-1).